A 133-amino-acid chain; its full sequence is Small ribosomal subunit protein uS9 (133 aa).

Positions 114 to 133 are disordered; that stretch reads VERKKYGKKKARRSPQFSKR. The segment covering 118-133 has biased composition (basic residues); it reads KYGKKKARRSPQFSKR.

It belongs to the universal ribosomal protein uS9 family.

In Fusobacterium nucleatum subsp. nucleatum (strain ATCC 25586 / DSM 15643 / BCRC 10681 / CIP 101130 / JCM 8532 / KCTC 2640 / LMG 13131 / VPI 4355), this protein is Small ribosomal subunit protein uS9.